The chain runs to 597 residues: Probable translation initiation factor IF-2 (597 aa).

The 218-residue stretch at 4–221 folds into the tr-type G domain; that stretch reads IRQPIIAVLG…LIAGLSQKYL (218 aa). Residues 13 to 20 form a G1 region; the sequence is GHVDHGKT. Residue 13-20 participates in GTP binding; sequence GHVDHGKT. A G2 region spans residues 38 to 42; the sequence is GITQH. The G3 stretch occupies residues 77 to 80; the sequence is DTPG. GTP is bound by residues 77–81 and 131–134; these read DTPGH and NKID. The interval 131–134 is G4; it reads NKID. Residues 199 to 201 form a G5 region; sequence SAK.

It belongs to the TRAFAC class translation factor GTPase superfamily. Classic translation factor GTPase family. IF-2 subfamily.

Functionally, function in general translation initiation by promoting the binding of the formylmethionine-tRNA to ribosomes. Seems to function along with eIF-2. This is Probable translation initiation factor IF-2 from Thermococcus onnurineus (strain NA1).